The chain runs to 984 residues: MSRNDASQLDDGETTAESPPDDQANDAPEVGDPPGDPVDADSGVSRRTFLEGIGVASLLGIGTSAASDDSLFQMGGLKPVDDPIGNYPYRDWEDLYREKWDWDSVSRSTHSVNCTGSCSWNVYVKNGQVWREEQSGDYPRFDESLPDPNPRGCQKGACYTDYVNADQRIKHPLKRVGERGEGKWKRISWDEALTEIAEHVVDEVEAGRYDAISGFTPIPAMSPVSFASGSRLVNLLGGVSHSFYDWYSDLPPGQPITWGTQTDNAESADWYNADYIIAWGSNINVTRIPDAKYFLESGYNGTKRVGVFTDYSQTAIHTDEWLSPDSGTDTALALGMAQTIVDEGLYDEAHLKEQTDMPLLVRQDTGKFLRASDVPSVNTDADRPEWMLLMLDSNGRIREAPGSLGERDGQKDYSKSIELDFDPQLDGETTVQTQSGRVQVRTVWAELRDELANWDPEMVHEETTVGKETYQRIAREFAEADKAKIIQGKGVNDWYHNDLGNRALQLLVTLTGNLGEQGTGLDHYVGQEKIWTFHGWKTLSFPTGKVRGVPTTLWTYYHAGILDNTDPDTAAKIRESIDKGWMPVYPEERDNGSRPDPTTMFVWRGNYFNQAKGNVAVEEQLWPKLDLVVDINFRMDSTAMYSDIVLPTASHYEKHDLSMTDMHTYVHPFTPAVEPLGESKTDWQIFRELAQKIQEVATERGVEPISDRKFDREIDLQSVYDDYVRDWETGEEGALAEDRAACEYILEHSEESNPADSDEQITFADTVEQPQRLLEAGDHWTSDIEDGEAYAPWKDFVQDKNPWPTVTGRQQYYIDHDWFLELGEELPTHKEGPENTGGDYPMEYNTPHGRWAIHSTWRDSEKLLRLQRGEPLLYLHPEDAEERGIEDGDSVEVFNDLAEVELQAKIYPSSQRGTARMYFAWERFQFDSDSNFNSLVPMYMKPTQLVQYPEDSGEHLHFFPNYWGPTGVNSDVRVDVRKAGGGDE.

The segment at 1 to 43 (MSRNDASQLDDGETTAESPPDDQANDAPEVGDPPGDPVDADSG) is disordered. A compositionally biased stretch (acidic residues) spans 8–24 (QLDDGETTAESPPDDQA). The 4Fe-4S Mo/W bis-MGD-type domain occupies 103 to 167 (DSVSRSTHSV…CYTDYVNADQ (65 aa)). [4Fe-4S] cluster contacts are provided by H110, C114, C118, and C153. D249 contributes to the Mo-bis(molybdopterin guanine dinucleotide) binding site.

The protein belongs to the prokaryotic molybdopterin-containing oxidoreductase family. As to quaternary structure, probable multiprotein complex; a catalytic heterodimer of an alpha and beta chain is proposed to associate with additional subunits involved in membrane attachment and electron transfer. [4Fe-4S] cluster serves as cofactor. Requires Mo-bis(molybdopterin guanine dinucleotide) as cofactor. Post-translationally, exported by the Tat system.

It localises to the cell membrane. It catalyses the reaction nitrate + a quinol = a quinone + nitrite + H2O. With respect to regulation, inhibited by cyanide, azide and antimycin A. Enzyme stability is not dependent on salt concentration. The respiratory membrane-bound nitrate reductase enzyme complex plays a role in generation of metabolic energy by using nitrate as a terminal electron acceptor during anaerobic conditions. The alpha chain is the actual site of nitrate reduction. The chain is Respiratory nitrate reductase subunit alpha (narG) from Haloferax mediterranei (strain ATCC 33500 / DSM 1411 / JCM 8866 / NBRC 14739 / NCIMB 2177 / R-4) (Halobacterium mediterranei).